A 130-amino-acid polypeptide reads, in one-letter code: Protein TraH (130 aa).

The segment at Met-1–Ala-78 is disordered. Low complexity predominate over residues Pro-37–Pro-54.

The initiation process of transfer DNA synthesis requires the interaction of at least three plasmid-specific components (TraH, TraI, and TraJ) at the transfer origin resulting in the assembly of a specialized nucleoprotein complex - the relaxosome. This is Protein TraH (traH) from Escherichia coli.